The primary structure comprises 320 residues: MDYDNMVKTLEILKDVVNALECADKGNFDKALEYLEKAQKVDKDNPLVLYVKGIVLKLKGDMEKAEKYFECLENIEGTSLLSLGNLICLTFVKGEYERTLKYIEKLSRLSKPCYLSPFHKALIYIEFGEFEKALEALDEFLKIYPNLTSILRQKASILEILGKLDEALDCVNKILSIKKDDAHAWYLKGRILKKLGNIKEALDALKMAINLNENLVHVYKDIAYLELANNNYEEALNYITKYLEKFPNDVEAKFYLALIYENLNKVDDALKIYDKIISNKNVKDKLLIKSSILNKARILEKLGKIEEAVETYNKAFDNNI.

9 TPR repeats span residues 12–45 (ILKD…DKDN), 46–79 (PLVL…EGTS), 80–113 (LLSL…SKPC), 114–147 (YLSP…YPNL), 148–181 (TSIL…KKDD), 182–215 (AHAW…NENL), 216–249 (VHVY…FPND), 250–283 (VEAK…KNVK), and 289–320 (KSSI…DNNI).

This is TPR repeat-containing protein MJ0263 from Methanocaldococcus jannaschii (strain ATCC 43067 / DSM 2661 / JAL-1 / JCM 10045 / NBRC 100440) (Methanococcus jannaschii).